The chain runs to 224 residues: Urease accessory protein UreF (224 aa).

This sequence belongs to the UreF family. As to quaternary structure, ureD, UreF and UreG form a complex that acts as a GTP-hydrolysis-dependent molecular chaperone, activating the urease apoprotein by helping to assemble the nickel containing metallocenter of UreC. The UreE protein probably delivers the nickel.

Its subcellular location is the cytoplasm. Functionally, required for maturation of urease via the functional incorporation of the urease nickel metallocenter. The polypeptide is Urease accessory protein UreF (Azotobacter vinelandii (strain DJ / ATCC BAA-1303)).